The sequence spans 998 residues: RNA-directed RNA polymerase (998 aa).

Residues 17–34 form a helical membrane-spanning segment; it reads LPVGIATVSGCGAVVYCI. Positions 35-998 are cytoplasmic; that stretch reads SKFWGYGAIA…AQPQPSNNRK (964 aa). Residues 91–282 are capping; the sequence is NGHAVSGAVR…LVYTIPQYVI (192 aa). Asp-692 acts as the For RdRp/TNTase activity in catalysis. A disordered region spans residues 901-998; the sequence is AKQTRANPGT…AQPQPSNNRK (98 aa). Polar residues-rich tracts occupy residues 904 to 913 and 947 to 961; these read TRANPGTSRP and GKTNGKSDGNITAGE. The segment covering 971–984 has biased composition (basic residues); sequence KGPRGGKTNTRRTP.

Belongs to the nodaviridae RNA polymerase family. In terms of assembly, homododecamer. Forms 2 stacked rings of 35-nm in diameter, arranged in a crown-like structure at the opening of virus-induced replication vesicles. Interacts with protein B2. Requires Mn(2+) as cofactor.

It is found in the host mitochondrion outer membrane. It carries out the reaction RNA(n) + a ribonucleoside 5'-triphosphate = RNA(n+1) + diphosphate. With respect to regulation, drastically inhibited by phosphonoacetic acid. Only slightly inhibited by gliotoxin. In terms of biological role, RNA-dependent RNA polymerase, which replicates the viral genome composed of 2 RNA segments, RNA1 and RNA2. Does not need an exogenous primer. Also possesses a terminal nucleotidyl transferase (TNTase) activity. The TNTase catalyzes the addition of nucleotide to the 3'-end of plus- and minus-stranded RNAs, probably to repair the 3'-end nucleotide loss. Forms the open necked connection to the cytosol of the virus-induced replication vesicles. Mediates viral RNA1 recruitment. The protein is RNA-directed RNA polymerase of Heteronychus arator (African black beetle).